Reading from the N-terminus, the 87-residue chain is Small ribosomal subunit protein uS15c (87 aa).

It belongs to the universal ribosomal protein uS15 family. In terms of assembly, part of the 30S ribosomal subunit.

It is found in the plastid. The protein resides in the chloroplast. This Solanum bulbocastanum (Wild potato) protein is Small ribosomal subunit protein uS15c (rps15).